The chain runs to 1396 residues: DNA-directed RNA polymerase subunit beta' (1396 aa).

Residues C72, C74, C87, and C90 each coordinate Zn(2+). Mg(2+) contacts are provided by D463, D465, and D467. Residues C814, C889, C896, and C899 each coordinate Zn(2+).

This sequence belongs to the RNA polymerase beta' chain family. As to quaternary structure, the RNAP catalytic core consists of 2 alpha, 1 beta, 1 beta' and 1 omega subunit. When a sigma factor is associated with the core the holoenzyme is formed, which can initiate transcription. Mg(2+) is required as a cofactor. Zn(2+) serves as cofactor.

It carries out the reaction RNA(n) + a ribonucleoside 5'-triphosphate = RNA(n+1) + diphosphate. DNA-dependent RNA polymerase catalyzes the transcription of DNA into RNA using the four ribonucleoside triphosphates as substrates. The sequence is that of DNA-directed RNA polymerase subunit beta' from Chlamydia trachomatis serovar A (strain ATCC VR-571B / DSM 19440 / HAR-13).